Here is a 215-residue protein sequence, read N- to C-terminus: uncharacterized protein (215 aa).

Helical transmembrane passes span 21 to 40 (IIKY…VLIN), 50 to 69 (LIFS…TIIF), 95 to 117 (FVAI…YVFF), 122 to 144 (LEIA…LVVL), 157 to 179 (NFVG…LILQ), and 185 to 207 (LIFI…SAYL).

This sequence belongs to the CcmB/CycW/HelB family.

Its subcellular location is the cell membrane. This is an uncharacterized protein from Rickettsia prowazekii (strain Madrid E).